Here is a 356-residue protein sequence, read N- to C-terminus: Gluconolactonase (356 aa).

Residues M1–A35 constitute a signal peptide (tat-type signal).

As to quaternary structure, homodimer. Post-translationally, predicted to be exported by the Tat system. The position of the signal peptide cleavage has been experimentally proven.

It is found in the periplasm. It catalyses the reaction D-glucono-1,5-lactone + H2O = D-gluconate + H(+). It participates in carbohydrate acid metabolism; D-gluconate biosynthesis; D-gluconate from D-glucono-1,5-lactone: step 1/1. In terms of biological role, hydrolyzes the gluconolactone formed by glucose-fructose oxidoreductase, and that formed in aerobic conditions by the glucose dehydrogenase present. The chain is Gluconolactonase (gnl) from Zymomonas mobilis subsp. mobilis (strain ATCC 31821 / ZM4 / CP4).